Reading from the N-terminus, the 222-residue chain is Interleukin-12 subunit alpha (222 aa).

The first 25 residues, 1–25 (MCPLRSLFLMATLVFLNHLDHLSLA), serve as a signal peptide directing secretion. Cystine bridges form between C40–C113, C67–C199, and C88–C126. N-linked (GlcNAc...) asparagine glycosylation is found at N96 and N174.

The protein belongs to the IL-6 superfamily. In terms of assembly, heterodimer with IL12B; disulfide-linked. This heterodimer is known as interleukin IL-12. Heterodimer with EBI3/IL27B; not disulfide-linked. This heterodimer is known as interleukin IL-35. Interacts with NBR1; this interaction promotes IL-12 secretion.

It localises to the secreted. Functionally, heterodimerizes with IL12B to form the IL-12 cytokine or with EBI3/IL27B to form the IL-35 cytokine. IL-12 is primarily produced by professional antigen-presenting cells (APCs) such as B-cells and dendritic cells (DCs) as well as macrophages and granulocytes and regulates T-cell and natural killer-cell responses, induces the production of interferon-gamma (IFN-gamma), favors the differentiation of T-helper 1 (Th1) cells and is an important link between innate resistance and adaptive immunity. Mechanistically, exerts its biological effects through a receptor composed of IL12R1 and IL12R2 subunits. Binding to the receptor results in the rapid tyrosine phosphorylation of a number of cellular substrates including the JAK family kinases TYK2 and JAK2. In turn, recruited STAT4 gets phosphorylated and translocates to the nucleus where it regulates cytokine/growth factor responsive genes. As part of IL-35, plays essential roles in maintaining the immune homeostasis of the liver microenvironment and also functions as an immune-suppressive cytokine. Mediates biological events through unconventional receptors composed of IL12RB2 and gp130/IL6ST heterodimers or homodimers. Signaling requires the transcription factors STAT1 and STAT4, which form a unique heterodimer that binds to distinct DNA sites. The polypeptide is Interleukin-12 subunit alpha (IL12A) (Lama glama (Llama)).